A 397-amino-acid polypeptide reads, in one-letter code: Tryptophan synthase beta chain (397 aa).

Lys-86 carries the post-translational modification N6-(pyridoxal phosphate)lysine.

Belongs to the TrpB family. In terms of assembly, tetramer of two alpha and two beta chains. The cofactor is pyridoxal 5'-phosphate.

The catalysed reaction is (1S,2R)-1-C-(indol-3-yl)glycerol 3-phosphate + L-serine = D-glyceraldehyde 3-phosphate + L-tryptophan + H2O. It participates in amino-acid biosynthesis; L-tryptophan biosynthesis; L-tryptophan from chorismate: step 5/5. Functionally, the beta subunit is responsible for the synthesis of L-tryptophan from indole and L-serine. The protein is Tryptophan synthase beta chain (trpB) of Buchnera aphidicola subsp. Diuraphis noxia.